The primary structure comprises 305 residues: NAD kinase (305 aa).

The active-site Proton acceptor is aspartate 88. NAD(+) contacts are provided by residues 88 to 89, arginine 93, 162 to 163, lysine 173, asparagine 192, 203 to 208, and glutamine 262; these read DG, NE, and TAYSFS.

It belongs to the NAD kinase family. The cofactor is a divalent metal cation.

It is found in the cytoplasm. It catalyses the reaction NAD(+) + ATP = ADP + NADP(+) + H(+). In terms of biological role, involved in the regulation of the intracellular balance of NAD and NADP, and is a key enzyme in the biosynthesis of NADP. Catalyzes specifically the phosphorylation on 2'-hydroxyl of the adenosine moiety of NAD to yield NADP. This chain is NAD kinase, found in Tropheryma whipplei (strain TW08/27) (Whipple's bacillus).